The following is a 639-amino-acid chain: Pheromone B alpha 1 receptor (639 aa).

Helical transmembrane passes span 8-28, 37-57, 70-90, 113-133, 163-183, 209-229, and 272-292; these read LFPI…PWHL, FFMM…VAWA, ISIR…LCII, ILVD…LQYI, VWPV…LLQF, MALA…VIVL, and LTRW…GFAE. 4 disordered regions span residues 375 to 416, 490 to 516, 532 to 563, and 611 to 639; these read PRPM…SSPI, TVPH…SSSA, SADV…RLPS, and TTAG…RASV. Over residues 383–398 the composition is skewed to low complexity; sequence SSSGFSSSDSTRFGSS. 2 stretches are compositionally biased toward low complexity: residues 541 to 551 and 611 to 621; these read GSSAGGVASTS and TTAGAPATTTP.

Belongs to the G-protein coupled receptor 4 family.

Its subcellular location is the membrane. Functionally, receptor for the BAP1 pheromone, a prenylated mating factor. Has a role in the initiation of B-regulated nuclear migration. This Schizophyllum commune (Split gill fungus) protein is Pheromone B alpha 1 receptor (BAR1).